The chain runs to 59 residues: MADLKVTQIKSIIGTKQNQKDSLRTLGLKGIRQTVVREDNAQNRGLINVVRHLVTVEEV.

The protein belongs to the universal ribosomal protein uL30 family. Part of the 50S ribosomal subunit.

This Rhodococcus erythropolis (strain PR4 / NBRC 100887) protein is Large ribosomal subunit protein uL30.